The following is a 984-amino-acid chain: Ephrin type-B receptor 1 (984 aa).

Residues 1 to 17 form the signal peptide; the sequence is MALDCLLLFLLASAVAA. At 18 to 540 the chain is on the extracellular side; that stretch reads MEETLMDTRT…YKSELREQLP (523 aa). One can recognise an Eph LBD domain in the interval 19–201; it reads EETLMDTRTA…FFKKCPSIVQ (183 aa). Fibronectin type-III domains are found at residues 322–432 and 433–528; these read VPSG…TNQA and APST…TLTD. Residues N334, N426, and N480 are each glycosylated (N-linked (GlcNAc...) asparagine). Residues 541–563 traverse the membrane as a helical segment; the sequence is LIAGSAAAGVVFVVSLVAISIVC. Residues 564–984 are Cytoplasmic-facing; that stretch reads SRKRAYSKEA…QMNQSPSVMA (421 aa). At Y600 the chain carries Phosphotyrosine. Positions 619–882 constitute a Protein kinase domain; the sequence is VKIEEVIGAG…EIVNTLDKMI (264 aa). ATP is bound by residues 625 to 633 and K651; that span reads IGAGEFGEV. Residue D744 is the Proton acceptor of the active site. Residues 911–975 enclose the SAM domain; the sequence is TAFTTVDDWL…LSSIHSMRVQ (65 aa). Y928 carries the phosphotyrosine; by autocatalysis modification. The PDZ-binding signature appears at 982–984; that stretch reads VMA.

This sequence belongs to the protein kinase superfamily. Tyr protein kinase family. Ephrin receptor subfamily. In terms of assembly, heterotetramer upon binding of the ligand. The heterotetramer is composed of an ephrin dimer and a receptor dimer. Oligomerization is probably required to induce biological responses. Interacts with EPHB6; transphosphorylates EPHB6 to form an active signaling complex. Interacts with PICK1. Interacts (through Tyr-594) with NCK1 (via SH2 domain); activates the JUN cascade to regulate cell adhesion. The ligand-activated form interacts (through Tyr-928) with GRB7 and GRB10 (via SH2 domains). The ligand-activated form interacts (residues within the catalytic domain) with GRB2 (via SH2 domain). Interacts with GRB2, SHC1 and SRC; activates the MAPK/ERK cascade to regulate cell migration. Interacts with CBL; regulates receptor degradation through ubiquitination. Interacts with ACP1. Phosphorylated. Autophosphorylation is stimulated by the ligand EFNB1. Required for interaction with SH2 domain-containing interactors, for activation of the MAPK/ERK and JUN signaling cascades and for ubiquitination by CBL. In terms of processing, ubiquitinated; (EFNB1)ligand-induced poly- and/or multi-ubiquitination by CBL is regulated by SRC and leads to lysosomal degradation. As to expression, expressed in neural stem and progenitor cells in the dentate gyrus. Expressed in myogenic progenitor cells.

The protein resides in the cell membrane. Its subcellular location is the early endosome membrane. It localises to the cell projection. The protein localises to the dendrite. The enzyme catalyses L-tyrosyl-[protein] + ATP = O-phospho-L-tyrosyl-[protein] + ADP + H(+). In terms of biological role, receptor tyrosine kinase which binds promiscuously transmembrane ephrin-B family ligands residing on adjacent cells, leading to contact-dependent bidirectional signaling into neighboring cells. The signaling pathway downstream of the receptor is referred to as forward signaling while the signaling pathway downstream of the ephrin ligand is referred to as reverse signaling. Cognate/functional ephrin ligands for this receptor include EFNB1, EFNB2 and EFNB3. During nervous system development, regulates retinal axon guidance redirecting ipsilaterally ventrotemporal retinal ganglion cells axons at the optic chiasm midline. This probably requires repulsive interaction with EFNB2. In the adult nervous system together with EFNB3, regulates chemotaxis, proliferation and polarity of the hippocampus neural progenitors. In addition to its role in axon guidance also plays an important redundant role with other ephrin-B receptors in development and maturation of dendritic spines and synapse formation. May also regulate angiogenesis. More generally, may play a role in targeted cell migration and adhesion. Upon activation by EFNB1 and probably other ephrin-B ligands activates the MAPK/ERK and the JNK signaling cascades to regulate cell migration and adhesion respectively. Involved in the maintenance of the pool of satellite cells (muscle stem cells) by promoting their self-renewal and reducing their activation and differentiation. The sequence is that of Ephrin type-B receptor 1 (Ephb1) from Mus musculus (Mouse).